The chain runs to 316 residues: Small ribosomal subunit biogenesis GTPase RsgA (316 aa).

A CP-type G domain is found at 83–248 (DQYKSKLFAA…LIDSPGFQEF (166 aa)). GTP is bound by residues 131–134 (NKTD) and 185–193 (GQSGMGKST). Positions 272, 277, 279, and 285 each coordinate Zn(2+).

The protein belongs to the TRAFAC class YlqF/YawG GTPase family. RsgA subfamily. In terms of assembly, monomer. Associates with 30S ribosomal subunit, binds 16S rRNA. It depends on Zn(2+) as a cofactor.

It is found in the cytoplasm. Its function is as follows. One of several proteins that assist in the late maturation steps of the functional core of the 30S ribosomal subunit. Helps release RbfA from mature subunits. May play a role in the assembly of ribosomal proteins into the subunit. Circularly permuted GTPase that catalyzes slow GTP hydrolysis, GTPase activity is stimulated by the 30S ribosomal subunit. The protein is Small ribosomal subunit biogenesis GTPase RsgA of Paraburkholderia phytofirmans (strain DSM 17436 / LMG 22146 / PsJN) (Burkholderia phytofirmans).